A 327-amino-acid chain; its full sequence is MQIKRSIEKIPGGMMLVPLFLGALCHTFSPGAGKYFGSFTNGMITGTVPILAVWFFCMGASIKLSATGTVLRKSGTLVVTKIAVAWVVAAIASRIIPEHGVEVGFFAGLSTLALVAAMDMTNGGLYASIMQQYGTKEEAGAFVLMSLESGPLMTMIILGTAGIASFEPHVFVGAVLPFLVGFALGNLDPELREFFSKAVQTLIPFFAFALGNTIDLTVIAQTGLLGILLGVAVIIVTGIPLIIADKLIGGGDGTAGIAASSSAGAAVATPVLIAEMVPAFKPMAPAATSLVATAVIVTSILVPILTSIWSRKVKARAAKIEILGTVK.

A run of 10 helical transmembrane segments spans residues Ile-10 to Pro-30, Gly-42 to Ile-62, Lys-73 to Ser-93, Ile-95 to Val-115, Ala-139 to Gly-159, Ile-163 to Ala-183, Val-199 to Ile-219, Leu-224 to Ala-244, Thr-254 to Ala-274, and Ser-289 to Trp-309.

This sequence belongs to the KdgT transporter family.

It is found in the cell inner membrane. It carries out the reaction 2-dehydro-3-deoxy-D-gluconate(in) + H(+)(in) = 2-dehydro-3-deoxy-D-gluconate(out) + H(+)(out). Catalyzes the proton-dependent uptake of 2-keto-3-deoxygluconate (KDG) into the cell. The polypeptide is 2-keto-3-deoxygluconate permease (Escherichia coli O127:H6 (strain E2348/69 / EPEC)).